Here is a 161-residue protein sequence, read N- to C-terminus: ATP synthase subunit b (161 aa).

The helical transmembrane segment at 11-31 threads the bilayer; the sequence is AISFVLFVWFCMKYIWPPIIL.

This sequence belongs to the ATPase B chain family. F-type ATPases have 2 components, F(1) - the catalytic core - and F(0) - the membrane proton channel. F(1) has five subunits: alpha(3), beta(3), gamma(1), delta(1), epsilon(1). F(0) has three main subunits: a(1), b(2) and c(10-14). The alpha and beta chains form an alternating ring which encloses part of the gamma chain. F(1) is attached to F(0) by a central stalk formed by the gamma and epsilon chains, while a peripheral stalk is formed by the delta and b chains.

Its subcellular location is the cell membrane. In terms of biological role, f(1)F(0) ATP synthase produces ATP from ADP in the presence of a proton or sodium gradient. F-type ATPases consist of two structural domains, F(1) containing the extramembraneous catalytic core and F(0) containing the membrane proton channel, linked together by a central stalk and a peripheral stalk. During catalysis, ATP synthesis in the catalytic domain of F(1) is coupled via a rotary mechanism of the central stalk subunits to proton translocation. Component of the F(0) channel, it forms part of the peripheral stalk, linking F(1) to F(0). The polypeptide is ATP synthase subunit b (Buchnera aphidicola subsp. Acyrthosiphon pisum (strain APS) (Acyrthosiphon pisum symbiotic bacterium)).